The primary structure comprises 543 residues: Chaperonin GroEL 1 (543 aa).

Residues 30–33, lysine 51, 87–91, glycine 415, and aspartate 496 contribute to the ATP site; these read TLGP and DGTTT.

This sequence belongs to the chaperonin (HSP60) family. As to quaternary structure, forms a cylinder of 14 subunits composed of two heptameric rings stacked back-to-back. Interacts with the co-chaperonin GroES.

The protein resides in the cytoplasm. The enzyme catalyses ATP + H2O + a folded polypeptide = ADP + phosphate + an unfolded polypeptide.. In terms of biological role, together with its co-chaperonin GroES, plays an essential role in assisting protein folding. The GroEL-GroES system forms a nano-cage that allows encapsulation of the non-native substrate proteins and provides a physical environment optimized to promote and accelerate protein folding. This chain is Chaperonin GroEL 1, found in Roseobacter denitrificans (strain ATCC 33942 / OCh 114) (Erythrobacter sp. (strain OCh 114)).